The following is a 93-amino-acid chain: Acyl carrier protein AcpXL (93 aa).

Residues 2–88 form the Carrier domain; the sequence is STTFDKVAKI…NLCAKIDALV (87 aa). Ser-37 carries the O-(pantetheine 4'-phosphoryl)serine modification.

Post-translationally, 4'-phosphopantetheine is transferred from CoA to a specific serine of apo-ACP by AcpS. This modification is essential for activity because fatty acids are bound in thioester linkage to the sulfhydryl of the prosthetic group.

It localises to the cytoplasm. It participates in glycolipid biosynthesis; KDO(2)-lipid A biosynthesis. In terms of biological role, carrier of the growing fatty acid chain in fatty acid biosynthesis. Is involved in the transfer of long hydroxylated fatty acids to lipid A. The polypeptide is Acyl carrier protein AcpXL (acpXL) (Mesorhizobium japonicum (strain LMG 29417 / CECT 9101 / MAFF 303099) (Mesorhizobium loti (strain MAFF 303099))).